The following is a 168-amino-acid chain: Transcription elongation factor GreB (168 aa).

A coiled-coil region spans residues 61-84 (KKMLREIDSRVRFLRKRLENLKVV).

It belongs to the GreA/GreB family. GreB subfamily.

In terms of biological role, necessary for efficient RNA polymerase transcription elongation past template-encoded arresting sites. The arresting sites in DNA have the property of trapping a certain fraction of elongating RNA polymerases that pass through, resulting in locked ternary complexes. Cleavage of the nascent transcript by cleavage factors such as GreA or GreB allows the resumption of elongation from the new 3'terminus. GreB releases sequences of up to 9 nucleotides in length. In Pseudomonas aeruginosa (strain ATCC 15692 / DSM 22644 / CIP 104116 / JCM 14847 / LMG 12228 / 1C / PRS 101 / PAO1), this protein is Transcription elongation factor GreB.